Here is an 815-residue protein sequence, read N- to C-terminus: SNF1 protein kinase subunit beta-1 (815 aa).

Over residues 1–11 (MGNSPSTQDPS) the composition is skewed to polar residues. Disordered regions lie at residues 1-88 (MGNS…TIDK) and 120-146 (HDVGAPEEQVKSPSFLSPGPSMATVKR). The N-myristoyl glycine moiety is linked to residue G2. The span at 12–31 (HSTKKEHGHHFHDAFNKDRQ) shows a compositional bias: basic and acidic residues. Residues 32–42 (GSITSQLFNNR) are compositionally biased toward polar residues. The residue at position 33 (S33) is a Phosphoserine. 2 stretches are compositionally biased toward basic and acidic residues: residues 72-88 (PSTDCDGRMSSDTTIDK) and 120-129 (HDVGAPEEQV). S181, S198, S200, S206, S209, and S220 each carry phosphoserine. Disordered stretches follow at residues 311-335 (HANNNGNIENNTRNKGNAGGSNDDF), 363-389 (HHNKTKKAQSKKIRSASNSRRSSFASL), and 410-444 (PLHPIINDNESQYSAPQHREISHHSNSMSSMSSIS). Over residues 313-326 (NNNGNIENNTRNKG) the composition is skewed to low complexity. S331 carries the phosphoserine modification. Residues 363-376 (HHNKTKKAQSKKIR) show a composition bias toward basic residues. Low complexity-rich tracts occupy residues 377-389 (SASNSRRSSFASL) and 433-444 (HSNSMSSMSSIS). The kinase-interacting sequence (KIS); required for interaction with SNF1 stretch occupies residues 473-716 (VSTDIASALK…LQQGGNIDAE (244 aa)). Phosphoserine is present on residues S494 and S497. The segment at 581-616 (EPTLDEELPKRPELKRFPSSSRKSSYYSAKGVERPS) is disordered. A compositionally biased stretch (basic and acidic residues) spans 587–596 (ELPKRPELKR). Over residues 599–608 (SSSRKSSYYS) the composition is skewed to low complexity. S643 carries the post-translational modification Phosphoserine. An association with SNF1 kinase complex (ASC) domain; required for interaction with SNF4 region spans residues 724 to 804 (SRYPVPDLPI…FITQVVYAPC (81 aa)).

It belongs to the 5'-AMP-activated protein kinase beta subunit family. Component of the SNF1 kinase complex, a heterotrimeric complex composed of the catalytic alpha subunit SNF1, one of the three related beta subunits SIP1, SIP2 or GAL83, and the regulatory gamma subunit SNF4. The beta subunit serves as a bridge between the catalytic and the regulatory subunit. Interacts (via KIS domain) with SNF1. Interacts (via ASC domain) with SNF4. Post-translationally, phosphorylated by SNF1 in vitro.

The protein localises to the cytoplasm. It localises to the vacuole membrane. Beta subunit of the SNF1 kinase complex, which is required for transcriptional, metabolic, and developmental adaptations in response to glucose limitation. Has a structural role, mediating heterotrimer formation, and a regulatory role, defining carbon source-regulated subcellular location and substrate specificity of the SNF1 kinase complex. Promotes the PKA-regulated relocalization of the SNF1 kinase complex to the vacuolar membrane in response to various types of carbon stress. In Saccharomyces cerevisiae (strain RM11-1a) (Baker's yeast), this protein is SNF1 protein kinase subunit beta-1 (SIP1).